Reading from the N-terminus, the 392-residue chain is NADH dehydrogenase-like protein YjlD (392 aa).

The protein belongs to the NADH dehydrogenase family. The cofactor is FAD.

The protein is NADH dehydrogenase-like protein YjlD (yjlD) of Bacillus subtilis (strain 168).